Consider the following 100-residue polypeptide: Large ribosomal subunit protein uL23 (100 aa).

This sequence belongs to the universal ribosomal protein uL23 family. Part of the 50S ribosomal subunit. Contacts protein L29, and trigger factor when it is bound to the ribosome.

In terms of biological role, one of the early assembly proteins it binds 23S rRNA. One of the proteins that surrounds the polypeptide exit tunnel on the outside of the ribosome. Forms the main docking site for trigger factor binding to the ribosome. The sequence is that of Large ribosomal subunit protein uL23 from Pasteurella multocida (strain Pm70).